The chain runs to 350 residues: Phosphoribosylformylglycinamidine cyclo-ligase (350 aa).

It belongs to the AIR synthase family.

Its subcellular location is the cytoplasm. The enzyme catalyses 2-formamido-N(1)-(5-O-phospho-beta-D-ribosyl)acetamidine + ATP = 5-amino-1-(5-phospho-beta-D-ribosyl)imidazole + ADP + phosphate + H(+). It participates in purine metabolism; IMP biosynthesis via de novo pathway; 5-amino-1-(5-phospho-D-ribosyl)imidazole from N(2)-formyl-N(1)-(5-phospho-D-ribosyl)glycinamide: step 2/2. This is Phosphoribosylformylglycinamidine cyclo-ligase from Nitratidesulfovibrio vulgaris (strain DSM 19637 / Miyazaki F) (Desulfovibrio vulgaris).